The primary structure comprises 224 residues: MSSGEPAAVSIPIHDHHGKAPATSSAVPAAAAAAPAAAPAVAPRKVGIPFFRRGDHHRGSRCLAFLDFILRIAAFGPALAAAISTGTSDETLSVFTEFYQFRARFDDFPAFLFFLVANAIVAGYLVLSLPFSAVLVIRPQTIGLRLLLLVCDMIMAAMLTAAASAAAAIVDLAHNGNLRANWVAICMQFHGFCQRTSGSVVASFLTVVILMFLVILAACSIRKR.

Positions 1-22 (MSSGEPAAVSIPIHDHHGKAPA) are disordered. Residues 1–62 (MSSGEPAAVS…RGDHHRGSRC (62 aa)) are Cytoplasmic-facing. Residues 63–83 (LAFLDFILRIAAFGPALAAAI) traverse the membrane as a helical segment. Over 84–110 (STGTSDETLSVFTEFYQFRARFDDFPA) the chain is Extracellular. A helical transmembrane segment spans residues 111 to 131 (FLFFLVANAIVAGYLVLSLPF). The Cytoplasmic segment spans residues 132 to 145 (SAVLVIRPQTIGLR). A helical membrane pass occupies residues 146-166 (LLLLVCDMIMAAMLTAAASAA). The Extracellular portion of the chain corresponds to 167–200 (AAIVDLAHNGNLRANWVAICMQFHGFCQRTSGSV). The chain crosses the membrane as a helical span at residues 201–221 (VASFLTVVILMFLVILAACSI). The Cytoplasmic segment spans residues 222–224 (RKR).

Belongs to the Casparian strip membrane proteins (CASP) family. In terms of assembly, homodimer and heterodimers.

Its subcellular location is the cell membrane. Its function is as follows. Regulates membrane-cell wall junctions and localized cell wall deposition. Required for establishment of the Casparian strip membrane domain (CSD) and the subsequent formation of Casparian strips, a cell wall modification of the root endodermis that determines an apoplastic barrier between the intraorganismal apoplasm and the extraorganismal apoplasm and prevents lateral diffusion. The chain is Casparian strip membrane protein 1 from Oryza sativa subsp. indica (Rice).